Consider the following 503-residue polypeptide: Aspartyl/glutamyl-tRNA(Asn/Gln) amidotransferase subunit B (503 aa).

The protein belongs to the GatB/GatE family. GatB subfamily. In terms of assembly, heterotrimer of A, B and C subunits.

The catalysed reaction is L-glutamyl-tRNA(Gln) + L-glutamine + ATP + H2O = L-glutaminyl-tRNA(Gln) + L-glutamate + ADP + phosphate + H(+). It catalyses the reaction L-aspartyl-tRNA(Asn) + L-glutamine + ATP + H2O = L-asparaginyl-tRNA(Asn) + L-glutamate + ADP + phosphate + 2 H(+). Functionally, allows the formation of correctly charged Asn-tRNA(Asn) or Gln-tRNA(Gln) through the transamidation of misacylated Asp-tRNA(Asn) or Glu-tRNA(Gln) in organisms which lack either or both of asparaginyl-tRNA or glutaminyl-tRNA synthetases. The reaction takes place in the presence of glutamine and ATP through an activated phospho-Asp-tRNA(Asn) or phospho-Glu-tRNA(Gln). The protein is Aspartyl/glutamyl-tRNA(Asn/Gln) amidotransferase subunit B of Rhodococcus jostii (strain RHA1).